The following is a 347-amino-acid chain: Protein RecA (347 aa).

67–74 serves as a coordination point for ATP; the sequence is GPESSGKT.

Belongs to the RecA family.

The protein resides in the cytoplasm. Functionally, can catalyze the hydrolysis of ATP in the presence of single-stranded DNA, the ATP-dependent uptake of single-stranded DNA by duplex DNA, and the ATP-dependent hybridization of homologous single-stranded DNAs. It interacts with LexA causing its activation and leading to its autocatalytic cleavage. The protein is Protein RecA of Helicobacter pylori (strain HPAG1).